Reading from the N-terminus, the 574-residue chain is MSSLAVDDAERRVGDYHPNLWDDALIQSLSTPYGASPYRDVAEKLIGEIKEMFASISIEDGDDEICYFLQRLWMIDNVERLGISRHFENEIKAAMEDVYSRHWSDKGIACGRHSVVADLNSTALAFRTLRLHGYSVCSDVFKIFQDQKGEFACSADQTEGEIKGILNLLRASLIAFPGERILQEAEIFATTYLKEALPKIQGSRLSQEIEYVLEYGWLTDLPRLETRNYIEVLAEEITPYFKKPCMAVEKLLKLAKIEFNLFHSLQQTELKHLSRWWKDSGFAQLTFTRHRHVEFYTLASCIAMEPKHSAFRLGFAKLCYLGIVLDDIYDTYGKMEELELFTAAIKRWDTSTTECLPEYMKGVYMAFYDCVNEMARQAEKTQGWDTLDYARKTWEALIDAFMEEAKWISSGYVPTFQKYLDNGKVSFGYRAATLQPILTLDIPLPLHILQEIDFPSSFNDLASSILRLRGDICGYQAERSRGEQASSISCYMKDNPGSTEEDALSHVNAMIGDKIPEFNWEFMKPSKAPISSKKYAFDILRAFYHLYKYRDGFSIAKIETKKLVMRTVLDPVPM.

Mn(2+) is bound by residues D326, D330, and E478. The short motif at 326–330 (DDIYD) is the DDXXD motif element.

Belongs to the terpene synthase family. Tpsd subfamily. Mn(2+) serves as cofactor.

It is found in the cytoplasm. It catalyses the reaction (2E,6E)-farnesyl diphosphate = (3E,6E)-alpha-farnesene + diphosphate. Its pathway is terpene metabolism; oleoresin biosynthesis. Involved in sesquiterpene (C15) biosynthesis. The major product is alpha-farnesene. In Pinus taeda (Loblolly pine), this protein is Alpha-farnesene synthase (PT5).